The sequence spans 171 residues: 3-hydroxyanthranilate 3,4-dioxygenase (171 aa).

Arg-45 contacts O2. Fe cation contacts are provided by His-49, Glu-55, and His-93. Residue Glu-55 coordinates substrate. Substrate contacts are provided by Arg-97 and Glu-107. A divalent metal cation is bound by residues Cys-122, Cys-125, Cys-159, and Cys-162.

This sequence belongs to the 3-HAO family. Requires Fe(2+) as cofactor.

The protein localises to the cytoplasm. The enzyme catalyses 3-hydroxyanthranilate + O2 = (2Z,4Z)-2-amino-3-carboxymuconate 6-semialdehyde. The protein operates within cofactor biosynthesis; NAD(+) biosynthesis; quinolinate from L-kynurenine: step 3/3. Its function is as follows. Catalyzes the oxidative ring opening of 3-hydroxyanthranilate to 2-amino-3-carboxymuconate semialdehyde, which spontaneously cyclizes to quinolinate. The chain is 3-hydroxyanthranilate 3,4-dioxygenase from Candida albicans (strain SC5314 / ATCC MYA-2876) (Yeast).